A 413-amino-acid chain; its full sequence is Putative F-box protein At3g58820 (413 aa).

An F-box domain is found at 1–48 (MDGVSSLPNELLCHILSFLTTKEAALTSILSKRWRNLIAFVPNLYIDD).

In Arabidopsis thaliana (Mouse-ear cress), this protein is Putative F-box protein At3g58820.